The primary structure comprises 152 residues: Large ribosomal subunit protein bL9 (152 aa).

Belongs to the bacterial ribosomal protein bL9 family.

Functionally, binds to the 23S rRNA. The chain is Large ribosomal subunit protein bL9 from Streptococcus thermophilus (strain CNRZ 1066).